A 120-amino-acid polypeptide reads, in one-letter code: Immunogenic miracidial antigen 5D (120 aa).

A disordered region spans residues 41–120; it reads HIDVGDEDYH…PKKYGSGYKH (80 aa). Acidic residues predominate over residues 45–66; sequence GDEDYHDGDDDVDYTDDVDDVD.

This sequence belongs to the immunogenic miracidial antigen family.

This is Immunogenic miracidial antigen 5D (5D) from Schistosoma japonicum (Blood fluke).